Reading from the N-terminus, the 295-residue chain is 4-hydroxy-tetrahydrodipicolinate synthase (295 aa).

Position 47 (threonine 47) interacts with pyruvate. Tyrosine 135 serves as the catalytic Proton donor/acceptor. Lysine 163 functions as the Schiff-base intermediate with substrate in the catalytic mechanism. Pyruvate is bound at residue isoleucine 204.

This sequence belongs to the DapA family. Homotetramer; dimer of dimers.

It is found in the cytoplasm. It catalyses the reaction L-aspartate 4-semialdehyde + pyruvate = (2S,4S)-4-hydroxy-2,3,4,5-tetrahydrodipicolinate + H2O + H(+). It participates in amino-acid biosynthesis; L-lysine biosynthesis via DAP pathway; (S)-tetrahydrodipicolinate from L-aspartate: step 3/4. Catalyzes the condensation of (S)-aspartate-beta-semialdehyde [(S)-ASA] and pyruvate to 4-hydroxy-tetrahydrodipicolinate (HTPA). The polypeptide is 4-hydroxy-tetrahydrodipicolinate synthase (Caldicellulosiruptor bescii (strain ATCC BAA-1888 / DSM 6725 / KCTC 15123 / Z-1320) (Anaerocellum thermophilum)).